The following is a 254-amino-acid chain: NAD kinase (254 aa).

D44 (proton acceptor) is an active-site residue. Residues 44–45 (DG), 114–115 (NE), D144, A152, 155–160 (TAYNYS), and A179 contribute to the NAD(+) site.

Belongs to the NAD kinase family. It depends on a divalent metal cation as a cofactor.

It localises to the cytoplasm. The enzyme catalyses NAD(+) + ATP = ADP + NADP(+) + H(+). In terms of biological role, involved in the regulation of the intracellular balance of NAD and NADP, and is a key enzyme in the biosynthesis of NADP. Catalyzes specifically the phosphorylation on 2'-hydroxyl of the adenosine moiety of NAD to yield NADP. The polypeptide is NAD kinase (Cereibacter sphaeroides (strain ATCC 17029 / ATH 2.4.9) (Rhodobacter sphaeroides)).